Reading from the N-terminus, the 549-residue chain is Cilia- and flagella-associated protein 45 (549 aa).

A disordered region spans residues 1–27 (MPLSTAGVLSSASTASNRSRNRPRYRT). 2 coiled-coil regions span residues 119–232 (KEEL…MMEV) and 259–393 (IVEQ…KRNQ). The interval 391-416 (RNQEVADREWRRKEKENAQKKMETEA) is disordered.

Belongs to the CFAP45 family. As to quaternary structure, microtubule inner protein component of sperm flagellar doublet microtubules. Interacts with AK8; dimerization with AK8 may create a cavity at the interface of the dimer that can accommodate AMP. Interacts with CFAP52. Interacts with ENKUR. Directly interacts with DNALI1. Interacts with DNAH11. Interacts with DNAI1. In terms of tissue distribution, expressed in trachea multiciliated cells.

It is found in the cytoplasm. The protein resides in the cytoskeleton. Its subcellular location is the cilium axoneme. It localises to the flagellum axoneme. The protein localises to the cell projection. It is found in the cilium. The protein resides in the flagellum. Its function is as follows. Microtubule inner protein (MIP) part of the dynein-decorated doublet microtubules (DMTs) in cilia axoneme, which is required for motile cilia beating. It is an AMP-binding protein that may facilitate dynein ATPase-dependent ciliary and flagellar beating via adenine nucleotide homeostasis. May function as a donor of AMP to AK8 and hence promote ADP production. The chain is Cilia- and flagella-associated protein 45 from Bos taurus (Bovine).